The following is a 322-amino-acid chain: GTP 3',8-cyclase (322 aa).

One can recognise a Radical SAM core domain in the interval 4–229 (NFNRNIDYLR…IPVQMKKSGP (226 aa)). R13 serves as a coordination point for GTP. Positions 20 and 24 each coordinate [4Fe-4S] cluster. Y26 contributes to the S-adenosyl-L-methionine binding site. Residue C27 coordinates [4Fe-4S] cluster. R64 serves as a coordination point for GTP. G68 serves as a coordination point for S-adenosyl-L-methionine. Residue T95 coordinates GTP. Residue S119 participates in S-adenosyl-L-methionine binding. Residue K156 participates in GTP binding. M190 serves as a coordination point for S-adenosyl-L-methionine. Residues C253 and C256 each coordinate [4Fe-4S] cluster. 258–260 (RLR) serves as a coordination point for GTP. A [4Fe-4S] cluster-binding site is contributed by C270.

It belongs to the radical SAM superfamily. MoaA family. Monomer and homodimer. Requires [4Fe-4S] cluster as cofactor.

It catalyses the reaction GTP + AH2 + S-adenosyl-L-methionine = (8S)-3',8-cyclo-7,8-dihydroguanosine 5'-triphosphate + 5'-deoxyadenosine + L-methionine + A + H(+). Its pathway is cofactor biosynthesis; molybdopterin biosynthesis. Its function is as follows. Catalyzes the cyclization of GTP to (8S)-3',8-cyclo-7,8-dihydroguanosine 5'-triphosphate. The polypeptide is GTP 3',8-cyclase (Thermodesulfovibrio yellowstonii (strain ATCC 51303 / DSM 11347 / YP87)).